The following is an 873-amino-acid chain: Protein SEY1 (873 aa).

A disordered region spans residues 1–21 (MVANGHFAGSADGQDSSSYEH). At 1–749 (MVANGHFAGS…KRSAIGGITQ (749 aa)) the chain is on the cytoplasmic side. Residues 49–307 (GFNYHLISVF…IPADGFAVYA (259 aa)) form the GB1/RHD3-type G domain. GTP is bound at residue 59–66 (GSQSTGKS). A coiled-coil region spans residues 482-506 (SNYQQELSLYQKDLERTSGQLRRDE). Residues 676–703 (LDKWIGHTPSSATPADEEDLTPIGGVDD) are disordered. The segment covering 690 to 703 (ADEEDLTPIGGVDD) has biased composition (acidic residues). A helical transmembrane segment spans residues 750–770 (VPLYFYGLLFALGWNEILAVL). At 771-773 (RNP) the chain is on the lumenal side. A helical membrane pass occupies residues 774–794 (VYFLLLFVCAIGAYITYQLNL). At 795 to 873 (WGPIIKMTEA…EDVDDDDDDF (79 aa)) the chain is on the cytoplasmic side. A disordered region spans residues 828 to 873 (RQAMAMSGARNATEEHEMSRLSRKPAERGGRKNRADEDVDDDDDDF). The span at 839–863 (ATEEHEMSRLSRKPAERGGRKNRAD) shows a compositional bias: basic and acidic residues. Positions 864–873 (EDVDDDDDDF) are enriched in acidic residues.

This sequence belongs to the TRAFAC class dynamin-like GTPase superfamily. GB1/RHD3 GTPase family. RHD3 subfamily.

The protein resides in the endoplasmic reticulum membrane. Functionally, cooperates with the reticulon proteins and tubule-shaping DP1 family proteins to generate and maintain the structure of the tubular endoplasmic reticulum network. Has GTPase activity, which is required for its function in ER organization. This is Protein SEY1 from Ajellomyces capsulatus (strain G186AR / H82 / ATCC MYA-2454 / RMSCC 2432) (Darling's disease fungus).